A 253-amino-acid chain; its full sequence is Imidazole glycerol phosphate synthase subunit HisF (253 aa).

Active-site residues include aspartate 11 and aspartate 130.

The protein belongs to the HisA/HisF family. As to quaternary structure, heterodimer of HisH and HisF.

It localises to the cytoplasm. The enzyme catalyses 5-[(5-phospho-1-deoxy-D-ribulos-1-ylimino)methylamino]-1-(5-phospho-beta-D-ribosyl)imidazole-4-carboxamide + L-glutamine = D-erythro-1-(imidazol-4-yl)glycerol 3-phosphate + 5-amino-1-(5-phospho-beta-D-ribosyl)imidazole-4-carboxamide + L-glutamate + H(+). The protein operates within amino-acid biosynthesis; L-histidine biosynthesis; L-histidine from 5-phospho-alpha-D-ribose 1-diphosphate: step 5/9. IGPS catalyzes the conversion of PRFAR and glutamine to IGP, AICAR and glutamate. The HisF subunit catalyzes the cyclization activity that produces IGP and AICAR from PRFAR using the ammonia provided by the HisH subunit. In Geotalea uraniireducens (strain Rf4) (Geobacter uraniireducens), this protein is Imidazole glycerol phosphate synthase subunit HisF.